Here is a 267-residue protein sequence, read N- to C-terminus: Acetyl-coenzyme A carboxylase carboxyl transferase subunit beta 1 (267 aa).

A CoA carboxyltransferase N-terminal domain is found at 9–267 (TWQACPKCGR…NYGIGRSAHG (259 aa)). Positions 13, 16, 31, and 34 each coordinate Zn(2+). The segment at 13–34 (CPKCGRHVHQRQWGTYQQCPYC) adopts a C4-type zinc-finger fold.

The protein belongs to the AccD/PCCB family. In terms of assembly, acetyl-CoA carboxylase is a heterohexamer composed of biotin carboxyl carrier protein (AccB), biotin carboxylase (AccC) and two subunits each of ACCase subunit alpha (AccA) and ACCase subunit beta (AccD). Zn(2+) is required as a cofactor.

The protein localises to the cytoplasm. It catalyses the reaction N(6)-carboxybiotinyl-L-lysyl-[protein] + acetyl-CoA = N(6)-biotinyl-L-lysyl-[protein] + malonyl-CoA. It functions in the pathway lipid metabolism; malonyl-CoA biosynthesis; malonyl-CoA from acetyl-CoA: step 1/1. In terms of biological role, component of the acetyl coenzyme A carboxylase (ACC) complex. Biotin carboxylase (BC) catalyzes the carboxylation of biotin on its carrier protein (BCCP) and then the CO(2) group is transferred by the transcarboxylase to acetyl-CoA to form malonyl-CoA. This chain is Acetyl-coenzyme A carboxylase carboxyl transferase subunit beta 1, found in Lactiplantibacillus plantarum (strain JDM1) (Lactobacillus plantarum).